A 550-amino-acid chain; its full sequence is Formin-binding protein 1-like (550 aa).

Residues M1–D263 form the F-BAR domain. Coiled coils occupy residues F66–V258 and L334–E426. One can recognise an REM-1 domain in the interval H339–E416. Over residues Q423–E432 the composition is skewed to basic and acidic residues. The disordered stretch occupies residues Q423–E467. The SH3 domain occupies P479 to E540.

Belongs to the FNBP1 family. In terms of assembly, homodimerizes, the dimers can polymerize end-to-end to form filamentous structures. Interacts with GTP-bound cdc42 and wasl/n-wasp.

It localises to the cytoplasm. Its subcellular location is the cytoskeleton. It is found in the cell cortex. The protein localises to the cytoplasmic vesicle. The protein resides in the cell membrane. Required to coordinate membrane tubulation with reorganization of the actin cytoskeleton during endocytosis. Promotes cdc42-induced actin polymerization by activating the wasl-waspip complex, the predominant form of wasl/n-wasp in cells. Essential for autophagy of intracellular bacterial pathogens. This is Formin-binding protein 1-like (fnbp1l) from Xenopus tropicalis (Western clawed frog).